The primary structure comprises 308 residues: Elongation factor Ts (308 aa).

The interval 80 to 83 (TDFV) is involved in Mg(2+) ion dislocation from EF-Tu.

It belongs to the EF-Ts family.

It localises to the cytoplasm. Associates with the EF-Tu.GDP complex and induces the exchange of GDP to GTP. It remains bound to the aminoacyl-tRNA.EF-Tu.GTP complex up to the GTP hydrolysis stage on the ribosome. In Erythrobacter litoralis (strain HTCC2594), this protein is Elongation factor Ts.